The following is a 405-amino-acid chain: Tryptophan synthase beta chain (405 aa).

N6-(pyridoxal phosphate)lysine is present on K98.

This sequence belongs to the TrpB family. In terms of assembly, tetramer of two alpha and two beta chains. Requires pyridoxal 5'-phosphate as cofactor.

It carries out the reaction (1S,2R)-1-C-(indol-3-yl)glycerol 3-phosphate + L-serine = D-glyceraldehyde 3-phosphate + L-tryptophan + H2O. Its pathway is amino-acid biosynthesis; L-tryptophan biosynthesis; L-tryptophan from chorismate: step 5/5. In terms of biological role, the beta subunit is responsible for the synthesis of L-tryptophan from indole and L-serine. In Xanthomonas euvesicatoria pv. vesicatoria (strain 85-10) (Xanthomonas campestris pv. vesicatoria), this protein is Tryptophan synthase beta chain.